Reading from the N-terminus, the 49-residue chain is Large ribosomal subunit protein bL32 (49 aa).

The protein belongs to the bacterial ribosomal protein bL32 family.

This Nitratiruptor sp. (strain SB155-2) protein is Large ribosomal subunit protein bL32.